The chain runs to 125 residues: UPF0763 protein NAMH_0545 (125 aa).

It belongs to the UPF0763 family.

In Nautilia profundicola (strain ATCC BAA-1463 / DSM 18972 / AmH), this protein is UPF0763 protein NAMH_0545.